The chain runs to 560 residues: Trafficking protein particle complex II-specific subunit 65 (560 aa).

The disordered stretch occupies residues 164–193; sequence SSKNTNNHLEKNNRATHRVSSKNSEVHEAD. Ser393 and Ser398 each carry phosphoserine.

As to quaternary structure, part of the multisubunit TRAPP (transport protein particle) II complex composed of BET3, BET5, TRS20, TRS23, TRS31, TRS33, TRS65, TRS120 and TRS130. Interacts directly with TRS120 and TRS130.

The protein localises to the cytoplasm. The protein resides in the golgi apparatus. It localises to the cis-Golgi network. The protein operates within glycan metabolism; beta-glucan biosynthesis. Specific subunit of the TRAPP II complex, a highly conserved vesicle tethering complex that functions in the late Golgi as a guanine nucleotide exchanger (GEF) for the Golgi YPT1 GTPase. TRS65 plays a role in the YPT GEF activity of TRAPP II in concert with the two other TRAPP II-specific subunits TRS120 and TRS130. Involved in cell wall (1--&gt;6)-beta-glucan synthesis. The sequence is that of Trafficking protein particle complex II-specific subunit 65 (TRS65) from Saccharomyces cerevisiae (strain ATCC 204508 / S288c) (Baker's yeast).